A 549-amino-acid chain; its full sequence is Siroheme synthase (549 aa).

The tract at residues 1–203 (MNTFPLFFKL…GNENEALAQL (203 aa)) is precorrin-2 dehydrogenase /sirohydrochlorin ferrochelatase. Residues 22 to 23 (DV) and 43 to 44 (PS) each bind NAD(+). The residue at position 128 (Ser128) is a Phosphoserine. Residues 247-549 (GEVYIVGAGP…DGDLEQLIIG (303 aa)) form a uroporphyrinogen-III C-methyltransferase region. An S-adenosyl-L-methionine-binding site is contributed by Pro256. Asp279 acts as the Proton acceptor in catalysis. Lys301 functions as the Proton donor in the catalytic mechanism. S-adenosyl-L-methionine contacts are provided by residues 332–334 (GGD), Ile337, 362–363 (TA), Met414, and Ala443.

This sequence in the N-terminal section; belongs to the precorrin-2 dehydrogenase / sirohydrochlorin ferrochelatase family. The protein in the C-terminal section; belongs to the precorrin methyltransferase family.

The catalysed reaction is uroporphyrinogen III + 2 S-adenosyl-L-methionine = precorrin-2 + 2 S-adenosyl-L-homocysteine + H(+). It carries out the reaction precorrin-2 + NAD(+) = sirohydrochlorin + NADH + 2 H(+). The enzyme catalyses siroheme + 2 H(+) = sirohydrochlorin + Fe(2+). Its pathway is cofactor biosynthesis; adenosylcobalamin biosynthesis; precorrin-2 from uroporphyrinogen III: step 1/1. It participates in cofactor biosynthesis; adenosylcobalamin biosynthesis; sirohydrochlorin from precorrin-2: step 1/1. The protein operates within porphyrin-containing compound metabolism; siroheme biosynthesis; precorrin-2 from uroporphyrinogen III: step 1/1. It functions in the pathway porphyrin-containing compound metabolism; siroheme biosynthesis; siroheme from sirohydrochlorin: step 1/1. Its pathway is porphyrin-containing compound metabolism; siroheme biosynthesis; sirohydrochlorin from precorrin-2: step 1/1. Its function is as follows. Multifunctional enzyme that catalyzes the SAM-dependent methylations of uroporphyrinogen III at position C-2 and C-7 to form precorrin-2 via precorrin-1. Then it catalyzes the NAD-dependent ring dehydrogenation of precorrin-2 to yield sirohydrochlorin. Finally, it catalyzes the ferrochelation of sirohydrochlorin to yield siroheme. The polypeptide is Siroheme synthase (Psychrobacter arcticus (strain DSM 17307 / VKM B-2377 / 273-4)).